Here is a 118-residue protein sequence, read N- to C-terminus: Large ribosomal subunit protein bL17 (118 aa).

The protein belongs to the bacterial ribosomal protein bL17 family. Part of the 50S ribosomal subunit. Contacts protein L32.

The polypeptide is Large ribosomal subunit protein bL17 (Gemmatimonas aurantiaca (strain DSM 14586 / JCM 11422 / NBRC 100505 / T-27)).